The chain runs to 90 residues: Antitoxin epsilon 1 (90 aa).

The protein belongs to the epsilon antitoxin family. In terms of assembly, in the presence of the zeta toxin, forms an inactive PezA(2)PezT(2) heterotetramer.

Its function is as follows. Antitoxin component of a type II toxin-antitoxin (TA) system. Neutralizes the toxic effect of zeta toxin. Part of a postsegregational killing (PSK) system involved in the killing of plasmid-free cells. Continuous synthesis of the epsilon antitoxin is required to counteract the zeta toxin. This is Antitoxin epsilon 1 from Enterococcus faecalis (Streptococcus faecalis).